The primary structure comprises 260 residues: Putative serine protease 45 (260 aa).

Residues 1 to 234 (MTRHWPWEVS…YTKWIKKQMS (234 aa)) enclose the Peptidase S1 domain. Cys19 and Cys35 are disulfide-bonded. His34 (charge relay system) is an active-site residue. The N-linked (GlcNAc...) asparagine glycan is linked to Asn55. The active-site Charge relay system is Asp82. 3 disulfides stabilise this stretch: Cys116/Cys192, Cys151/Cys173, and Cys182/Cys210. The active-site Charge relay system is the Ser186.

The protein belongs to the peptidase S1 family.

The sequence is that of Putative serine protease 45 from Homo sapiens (Human).